We begin with the raw amino-acid sequence, 111 residues long: Large ribosomal subunit protein uL22 (111 aa).

This sequence belongs to the universal ribosomal protein uL22 family. In terms of assembly, part of the 50S ribosomal subunit.

This protein binds specifically to 23S rRNA; its binding is stimulated by other ribosomal proteins, e.g. L4, L17, and L20. It is important during the early stages of 50S assembly. It makes multiple contacts with different domains of the 23S rRNA in the assembled 50S subunit and ribosome. In terms of biological role, the globular domain of the protein is located near the polypeptide exit tunnel on the outside of the subunit, while an extended beta-hairpin is found that lines the wall of the exit tunnel in the center of the 70S ribosome. This is Large ribosomal subunit protein uL22 from Fusobacterium nucleatum subsp. nucleatum (strain ATCC 25586 / DSM 15643 / BCRC 10681 / CIP 101130 / JCM 8532 / KCTC 2640 / LMG 13131 / VPI 4355).